The chain runs to 1593 residues: ABC transporter C family member 8 (1593 aa).

10 helical membrane passes run 27-47, 75-95, 100-120, 135-155, 169-189, 280-300, 318-338, 392-412, 419-439, and 505-525; these read VVMT…LYYL, VIVS…IVSI, FEIL…GLVY, LYWV…TLAI, FSYF…VLFF, FYIA…GPTL, YDGL…SLLL, LCPY…SLVL, ASVF…LAIS, and LLLW…VYIL. Residues 280 to 561 enclose the ABC transmembrane type-1 1 domain; sequence FYIAALFKII…LPSVVSSIIE (282 aa). The region spanning 594-818 is the ABC transporter 1 domain; the sequence is VKIDNATLEW…GSHFTELMSH (225 aa). Residue 627-634 participates in ATP binding; sequence GQVGSGKS. The interval 816 to 938 is disordered; the sequence is MSHDEQQQQL…PLQKGEKSSV (123 aa). The stretch at 844-875 forms a coiled coil; the sequence is GDNKESENNEEQNEEEEGENENLLEKVLRKSR. The segment covering 851–865 has biased composition (acidic residues); that stretch reads NNEEQNEEEEGENEN. Residues 877 to 886 are compositionally biased toward low complexity; that stretch reads RSPSPSSNRN. The span at 905-922 shows a compositional bias: acidic residues; that stretch reads EEDEQDERELMEDIDIDG. Transmembrane regions (helical) follow at residues 1005–1025, 1064–1084, 1157–1177, 1251–1271, and 1280–1300; these read IGVL…LLSI, AKYY…ATFL, IIVI…VGAL, LAIR…LYTV, and GTAG…NWMV. In terms of domain architecture, ABC transmembrane type-1 2 spans 1010–1308; sequence ATCIIGFYVL…MVRMSCDLEN (299 aa). An ABC transporter 2 domain is found at 1344–1578; the sequence is IVFKNLWLTY…QDSIYYSLVK (235 aa). 1378–1385 contacts ATP; the sequence is GRTGAGKS.

It belongs to the ABC transporter superfamily. ABCC family. Conjugate transporter (TC 3.A.1.208) subfamily.

It is found in the membrane. The polypeptide is ABC transporter C family member 8 (abcC8) (Dictyostelium discoideum (Social amoeba)).